The primary structure comprises 311 residues: D-alanine--D-alanine ligase (311 aa).

The region spanning 106-301 (KLLWRGAELP…FDELCWRILL (196 aa)) is the ATP-grasp domain. 132-187 (IGSVGLPLMIKPAHEGSSIGMAKVERPEELEAARAEAARYDDLVLAERWIEGGEYT) provides a ligand contact to ATP. Mg(2+) is bound by residues Asp255, Glu268, and Asn270.

This sequence belongs to the D-alanine--D-alanine ligase family. Mg(2+) serves as cofactor. Requires Mn(2+) as cofactor.

Its subcellular location is the cytoplasm. It carries out the reaction 2 D-alanine + ATP = D-alanyl-D-alanine + ADP + phosphate + H(+). The protein operates within cell wall biogenesis; peptidoglycan biosynthesis. Cell wall formation. The sequence is that of D-alanine--D-alanine ligase from Alkalilimnicola ehrlichii (strain ATCC BAA-1101 / DSM 17681 / MLHE-1).